The following is a 204-amino-acid chain: GTP cyclohydrolase 1 (204 aa).

Residues Cys-92, His-95, and Cys-165 each coordinate Zn(2+).

This sequence belongs to the GTP cyclohydrolase I family. As to quaternary structure, homomer.

The enzyme catalyses GTP + H2O = 7,8-dihydroneopterin 3'-triphosphate + formate + H(+). The protein operates within cofactor biosynthesis; 7,8-dihydroneopterin triphosphate biosynthesis; 7,8-dihydroneopterin triphosphate from GTP: step 1/1. In Mycolicibacterium paratuberculosis (strain ATCC BAA-968 / K-10) (Mycobacterium paratuberculosis), this protein is GTP cyclohydrolase 1.